The sequence spans 350 residues: SUMO-activating enzyme subunit 1 (350 aa).

At methionine 1 the chain carries N-acetylmethionine. At valine 2 the chain carries N-acetylvaline; in SUMO-activating enzyme subunit 1, N-terminally processed. The residue at position 16 (serine 16) is a Phosphoserine. Lysine 202 carries the N6-acetyllysine modification.

This sequence belongs to the ubiquitin-activating E1 family. Heterodimer of SAE1 and UBA2/SAE2. The heterodimer corresponds to the two domains that are encoded on a single polypeptide chain in ubiquitin-activating enzyme E1. Interacts with UBE2I. Broadly expressed, with highest levels in testis.

The protein localises to the nucleus. The protein operates within protein modification; protein sumoylation. Its function is as follows. The heterodimer acts as an E1 ligase for SUMO1, SUMO2, SUMO3, and probably SUMO4. It mediates ATP-dependent activation of SUMO proteins followed by formation of a thioester bond between a SUMO protein and a conserved active site cysteine residue on UBA2/SAE2. The chain is SUMO-activating enzyme subunit 1 (Sae1) from Mus musculus (Mouse).